The chain runs to 216 residues: Dephospho-CoA kinase (216 aa).

The region spanning 18–216 (IIGVIGPPCS…SELASVLQSK (199 aa)) is the DPCK domain. 26 to 31 (CSGKST) is a binding site for ATP.

This sequence belongs to the CoaE family.

The protein localises to the cytoplasm. The enzyme catalyses 3'-dephospho-CoA + ATP = ADP + CoA + H(+). It functions in the pathway cofactor biosynthesis; coenzyme A biosynthesis; CoA from (R)-pantothenate: step 5/5. Catalyzes the phosphorylation of the 3'-hydroxyl group of dephosphocoenzyme A to form coenzyme A. The protein is Dephospho-CoA kinase of Rhodopirellula baltica (strain DSM 10527 / NCIMB 13988 / SH1).